A 353-amino-acid polypeptide reads, in one-letter code: Cyanuric acid amidohydrolase (353 aa).

Residues 1–90 form an RU A region; that stretch reads MSSTALYTVP…NIFVRDERQY (90 aa). Residues R49 and 69-70 contribute to the substrate site; that span reads SG. Residues 96-231 are RU B; the sequence is GLVTAVGRTR…CHILVVAESD (136 aa). Residue K145 is part of the active site. Substrate is bound by residues R177 and 214–215; that span reads SS. S214 serves as the catalytic Nucleophile. The RU C stretch occupies residues 237-353; sequence LRAAHTAMRD…TANATGEASR (117 aa). E275 is a Mg(2+) binding site. Substrate-binding positions include R302 and 321-322; that span reads SG. Residues A324, Q327, G328, P329, and G332 each coordinate Mg(2+).

Belongs to the cyclic amide hydrolase (CyAH) family. Homotetramer.

It catalyses the reaction cyanurate + H2O = 1-carboxybiuret + H(+). It participates in xenobiotic degradation; atrazine degradation; biuret from cyanurate: step 1/1. With respect to regulation, inhibited by barbituric acid. Responsible for the hydrolysis of cyanuric acid, an intermediate formed during catabolism of s-triazine based compounds in herbicides such as atrazine and polymers such as melamine. Catalyzes the hydrolytic opening of the s-triazine ring of cyanuric acid (2,4,6-trihydroxy-s-triazine) to yield carbon dioxide and carboxybiuret, which spontaneously decarboxylates to biuret. Required for growth on melamine or cyanuric acid as sole nitrogen source. The sequence is that of Cyanuric acid amidohydrolase from Rhodococcus sp.